An 837-amino-acid polypeptide reads, in one-letter code: Periplasmic nitrate reductase (837 aa).

The tat-type signal signal peptide spans 1-31 (MKLNRRDFIKANAAAAAISAAGLSVPGAAVA). The 4Fe-4S Mo/W bis-MGD-type domain maps to 37–93 (IRWDKAACRFCGTGCGVLVGTQDGRVVATQGDPDAPVNRGLNCIKGYFLSKIMYGAD). Residues Cys44, Cys47, Cys51, and Cys79 each contribute to the [4Fe-4S] cluster site. Mo-bis(molybdopterin guanine dinucleotide)-binding positions include Lys81, Gln148, Asn173, Cys177, 210–217 (WGSNMAEM), 241–245 (STFEH), and 260–262 (QTD). Residues 308 to 329 (EKNATSNGYPDADGKPKGDTGK) form a disordered region. Residues 319-329 (ADGKPKGDTGK) show a composition bias toward basic and acidic residues. Mo-bis(molybdopterin guanine dinucleotide)-binding positions include Met381, Gln385, Asn491, 517–518 (SD), Lys540, Asp567, and 727–736 (TGRVLEHWHT). Phe803 is a substrate binding site. 2 residues coordinate Mo-bis(molybdopterin guanine dinucleotide): Asn811 and Lys828.

It belongs to the prokaryotic molybdopterin-containing oxidoreductase family. NasA/NapA/NarB subfamily. In terms of assembly, component of the periplasmic nitrate reductase NapAB complex composed of NapA and NapB. The cofactor is [4Fe-4S] cluster. It depends on Mo-bis(molybdopterin guanine dinucleotide) as a cofactor. Post-translationally, predicted to be exported by the Tat system. The position of the signal peptide cleavage has not been experimentally proven.

It localises to the periplasm. It catalyses the reaction 2 Fe(II)-[cytochrome] + nitrate + 2 H(+) = 2 Fe(III)-[cytochrome] + nitrite + H2O. Functionally, catalytic subunit of the periplasmic nitrate reductase complex NapAB. Receives electrons from NapB and catalyzes the reduction of nitrate to nitrite. The polypeptide is Periplasmic nitrate reductase (Dechloromonas aromatica (strain RCB)).